Here is a 623-residue protein sequence, read N- to C-terminus: Laccase-1 (623 aa).

Residues 1-22 form the signal peptide; that stretch reads MKTFTSALALVVGMLAPGAVVA. The propeptide occupies 23–50; sequence APPSTPAQRDLVELREARQEGGKDLRPR. Cysteine 54 and cysteine 62 are oxidised to a cystine. 2 N-linked (GlcNAc...) asparagine glycosylation sites follow: asparagine 89 and asparagine 138. Residues histidine 143, histidine 145, histidine 188, and histidine 190 each contribute to the Cu cation site. Cystine bridges form between cysteine 164/cysteine 590 and cysteine 348/cysteine 382. Asparagine 251, asparagine 266, asparagine 294, and asparagine 339 each carry an N-linked (GlcNAc...) asparagine glycan. N-linked (GlcNAc...) asparagine glycans are attached at residues asparagine 426 and asparagine 446. Cu cation is bound by residues histidine 481, histidine 484, histidine 486, histidine 552, cysteine 553, histidine 554, and histidine 558. Positions 610–623 are excised as a propeptide; that stretch reads KRRRWVEESEWLVR.

Belongs to the multicopper oxidase family. As to quaternary structure, monomer. The cofactor is Cu cation. In terms of tissue distribution, secreted protein; extracellular space.

It carries out the reaction 4 hydroquinone + O2 = 4 benzosemiquinone + 2 H2O. Lignin degradation and detoxification of lignin-derived products. The protein is Laccase-1 (LAC1) of Melanocarpus albomyces.